We begin with the raw amino-acid sequence, 246 residues long: UDP-N-acetyl-D-mannosaminuronic acid transferase (246 aa).

It belongs to the glycosyltransferase 26 family.

It catalyses the reaction UDP-N-acetyl-alpha-D-mannosaminouronate + N-acetyl-alpha-D-glucosaminyl-di-trans,octa-cis-undecaprenyl diphosphate = beta-D-ManNAcA-(1-&gt;4)-alpha-D-GlcNAc-di-trans,octa-cis-undecaprenyl diphosphate + UDP + H(+). The protein operates within bacterial outer membrane biogenesis; enterobacterial common antigen biosynthesis. Catalyzes the synthesis of Und-PP-GlcNAc-ManNAcA (Lipid II), the second lipid-linked intermediate involved in enterobacterial common antigen (ECA) synthesis. This chain is UDP-N-acetyl-D-mannosaminuronic acid transferase, found in Yersinia pestis bv. Antiqua (strain Antiqua).